The primary structure comprises 412 residues: Zinc finger protein 260 (412 aa).

C2H2-type zinc fingers lie at residues 27–49 (YECNECRKTFSLKQNLVEHKKMH), 55–77 (HECTECGKVCSRVSSLTLHLRSH), 83–105 (YKCNKCGKAFSQKENFLSHQKHH), 136–158 (YACKECGKAFNGKAYLTEHEKIH), 164–186 (FECNQCGRAFSQKQYLIKHQNIH), 192–214 (FKCSECGKAFSQKENLIIHQRIH), 220–242 (YECKGCGKAFIQKSSLIRHQRSH), 248–270 (YTCKECGKAFSGKSNLTEHEKIH), 276–298 (YKCNECGTIFRQKQYLIKHHNIH), 304–326 (YECNKCGKAFSRITSLIVHVRIH), 332–354 (YECKVCGKAFCQSSSLTVHMRSH), 360–382 (YGCNECGKAFSQFSTLALHMRIH), and 388–412 (YQCSECGKAFSQKSHHIRHQRIHTH).

The protein belongs to the krueppel C2H2-type zinc-finger protein family. As to quaternary structure, binds DNA. Interacts with GATA4.

Its subcellular location is the nucleus. Functionally, transcription factor that acts as a cardiac regulator and an effector of alpha1-adrenergic signaling. Binds to PE response elements (PERE) present in the promoter of genes such as ANF/NPPA and acts as a direct transcriptional activator of NPPA. Also acts as a cofactor with GATA4, a key cardiac regulator. The protein is Zinc finger protein 260 (ZNF260) of Homo sapiens (Human).